We begin with the raw amino-acid sequence, 347 residues long: S-adenosylmethionine:tRNA ribosyltransferase-isomerase (347 aa).

This sequence belongs to the QueA family. In terms of assembly, monomer.

It localises to the cytoplasm. The catalysed reaction is 7-aminomethyl-7-carbaguanosine(34) in tRNA + S-adenosyl-L-methionine = epoxyqueuosine(34) in tRNA + adenine + L-methionine + 2 H(+). The protein operates within tRNA modification; tRNA-queuosine biosynthesis. Transfers and isomerizes the ribose moiety from AdoMet to the 7-aminomethyl group of 7-deazaguanine (preQ1-tRNA) to give epoxyqueuosine (oQ-tRNA). In Xylella fastidiosa (strain M12), this protein is S-adenosylmethionine:tRNA ribosyltransferase-isomerase.